Here is a 250-residue protein sequence, read N- to C-terminus: Pyrroloquinoline-quinone synthase (250 aa).

Belongs to the PqqC family.

It catalyses the reaction 6-(2-amino-2-carboxyethyl)-7,8-dioxo-1,2,3,4,7,8-hexahydroquinoline-2,4-dicarboxylate + 3 O2 = pyrroloquinoline quinone + 2 H2O2 + 2 H2O + H(+). It functions in the pathway cofactor biosynthesis; pyrroloquinoline quinone biosynthesis. Functionally, ring cyclization and eight-electron oxidation of 3a-(2-amino-2-carboxyethyl)-4,5-dioxo-4,5,6,7,8,9-hexahydroquinoline-7,9-dicarboxylic-acid to PQQ. The sequence is that of Pyrroloquinoline-quinone synthase from Ectopseudomonas mendocina (strain ymp) (Pseudomonas mendocina).